We begin with the raw amino-acid sequence, 629 residues long: Coiled-coil domain-containing protein 120 (629 aa).

The involved in CYTH2-binding stretch occupies residues 31 to 70; sequence RLRGLLDRQRALQEALSVKLQELRKVCLQEAELTGQLPPE. Residues 109–173 are a coiled coil; that stretch reads ELALEALERE…LRDFRARLGL (65 aa). Low complexity-rich tracts occupy residues 209–219 and 279–294; these read HSESSSLSESG and ASPT…SASS. The segment at 209–356 is disordered; that stretch reads HSESSSLSES…LFAARTRRSN (148 aa). The segment covering 323 to 332 has biased composition (polar residues); that stretch reads RQWSGSQDSQ. Ser-355 and Ser-357 each carry phosphoserine. Disordered regions lie at residues 399 to 432 and 602 to 629; these read QPVP…GAPR and PSQA…FTDG. Positions 418 to 432 are enriched in low complexity; the sequence is ARPSSAAPASRGAPR. At Arg-432 the chain carries Omega-N-methylarginine.

As to quaternary structure, interacts with NIN and CEP170; leading to recruit them to centrosomes. Interacts with CYTH2; this interaction is direct and stabilizes CCDC120, possibly by preventing ubiquitination. In terms of processing, ubiquitinated; interaction with CYTH2 may prevent ubiquitination.

The protein resides in the cytoplasm. Its subcellular location is the cytoskeleton. It localises to the microtubule organizing center. The protein localises to the centrosome. It is found in the centriole. The protein resides in the cell projection. Its subcellular location is the neuron projection. It localises to the growth cone. The protein localises to the endosome. Its function is as follows. Centriolar protein required for centriole subdistal appendage assembly and microtubule anchoring in interphase cells. Together with CCDC68, cooperate with subdistal appendage components ODF2, NIN and CEP170 for hierarchical subdistal appendage assembly. Recruits NIN and CEP170 to centrosomes. Also required for neurite growth. Localizes CYTH2 to vesicles to allow its transport along neurites, and subsequent ARF6 activation and neurite growth. This Mus musculus (Mouse) protein is Coiled-coil domain-containing protein 120.